The following is a 328-amino-acid chain: Ferredoxin--NADP reductase (328 aa).

Positions 36, 44, 49, 89, 123, 284, and 324 each coordinate FAD.

Belongs to the ferredoxin--NADP reductase type 2 family. Homodimer. It depends on FAD as a cofactor.

The catalysed reaction is 2 reduced [2Fe-2S]-[ferredoxin] + NADP(+) + H(+) = 2 oxidized [2Fe-2S]-[ferredoxin] + NADPH. The protein is Ferredoxin--NADP reductase of Lacticaseibacillus paracasei (strain ATCC 334 / BCRC 17002 / CCUG 31169 / CIP 107868 / KCTC 3260 / NRRL B-441) (Lactobacillus paracasei).